Consider the following 103-residue polypeptide: Large ribosomal subunit protein bL21 (103 aa).

This sequence belongs to the bacterial ribosomal protein bL21 family. As to quaternary structure, part of the 50S ribosomal subunit. Contacts protein L20.

This protein binds to 23S rRNA in the presence of protein L20. This is Large ribosomal subunit protein bL21 from Shewanella amazonensis (strain ATCC BAA-1098 / SB2B).